Consider the following 445-residue polypeptide: Exodeoxyribonuclease 7 large subunit (445 aa).

This sequence belongs to the XseA family. Heterooligomer composed of large and small subunits.

The protein localises to the cytoplasm. The enzyme catalyses Exonucleolytic cleavage in either 5'- to 3'- or 3'- to 5'-direction to yield nucleoside 5'-phosphates.. Functionally, bidirectionally degrades single-stranded DNA into large acid-insoluble oligonucleotides, which are then degraded further into small acid-soluble oligonucleotides. The polypeptide is Exodeoxyribonuclease 7 large subunit (Staphylococcus haemolyticus (strain JCSC1435)).